Reading from the N-terminus, the 315-residue chain is Methionyl-tRNA formyltransferase (315 aa).

Position 113–116 (113–116) interacts with (6S)-5,6,7,8-tetrahydrofolate; the sequence is SLLP.

It belongs to the Fmt family.

The catalysed reaction is L-methionyl-tRNA(fMet) + (6R)-10-formyltetrahydrofolate = N-formyl-L-methionyl-tRNA(fMet) + (6S)-5,6,7,8-tetrahydrofolate + H(+). Functionally, attaches a formyl group to the free amino group of methionyl-tRNA(fMet). The formyl group appears to play a dual role in the initiator identity of N-formylmethionyl-tRNA by promoting its recognition by IF2 and preventing the misappropriation of this tRNA by the elongation apparatus. The sequence is that of Methionyl-tRNA formyltransferase from Pectobacterium carotovorum subsp. carotovorum (strain PC1).